The chain runs to 37 residues: Tick defensin 2 (37 aa).

Disulfide bonds link C4/C26, C11/C34, and C15/C36.

It belongs to the invertebrate defensin family.

It localises to the secreted. Antibacterial peptide mostly active against Gram-positive bacteria (MIC=0.24 ug/ml on Bacillus subtilis, and MIC=0.94 ug/ml on Micrococcus luteus, MIC&gt;120 ug/ml on both Escherichia coli and Pseudomonas aeruginosa). This Ornithodoros savignyi (African eyed tampan) protein is Tick defensin 2.